Here is a 105-residue protein sequence, read N- to C-terminus: DNA-binding protein HU (105 aa).

Belongs to the bacterial histone-like protein family.

Functionally, histone-like DNA-binding protein which is capable of wrapping DNA to stabilize it, and thus to prevent its denaturation under extreme environmental conditions. The protein is DNA-binding protein HU (hup) of Treponema pallidum (strain Nichols).